Reading from the N-terminus, the 691-residue chain is Competence protein ComA (691 aa).

6 helical membrane-spanning segments follow: residues 183 to 203, 220 to 240, 280 to 300, 322 to 342, 347 to 367, and 396 to 416; these read HLVS…AWLA, WVLA…GFSV, LAVL…LIWA, VLSL…SPLV, IPWF…VPFA, and VAAA…LLLL.

To B.subtilis ComEC, H.influenzae REC2, and E.coli YcaI.

It localises to the cell inner membrane. Its function is as follows. Essential for natural transformation. Could be a transporter involved in DNA uptake. The chain is Competence protein ComA (comA) from Neisseria gonorrhoeae.